A 181-amino-acid chain; its full sequence is Oligoribonuclease (181 aa).

The Exonuclease domain occupies leucine 8–leucine 171. Tyrosine 129 is an active-site residue.

It belongs to the oligoribonuclease family.

It is found in the cytoplasm. Its function is as follows. 3'-to-5' exoribonuclease specific for small oligoribonucleotides. The protein is Oligoribonuclease of Aliivibrio fischeri (strain ATCC 700601 / ES114) (Vibrio fischeri).